The following is a 102-amino-acid chain: Protamine-2 (102 aa).

Phosphoserine occurs at positions 8, 10, and 37. The interval 16–102 (VYGQQLRGQE…RTRRRRCRRH (87 aa)) is disordered. A compositionally biased stretch (basic residues) spans 49–102 (GHSHYRRRHCSRRRLHRIHRQQHRSCGRRRRRSCRQRRRHRRGCRTRRRRCRRH).

This sequence belongs to the protamine P2 family. Interacts with TDRP. Post-translationally, proteolytic processing into mature chains is required for histone eviction during spermatogenesis. Transition proteins (TNP1 and TNP2) are required for processing. Testis.

It localises to the nucleus. The protein resides in the chromosome. Its function is as follows. Protamines substitute for histones in the chromatin of sperm during the haploid phase of spermatogenesis. They compact sperm DNA into a highly condensed, stable and inactive complex. The polypeptide is Protamine-2 (PRM2) (Hylobates lar (Lar gibbon)).